Here is a 169-residue protein sequence, read N- to C-terminus: MERAIFAGGCFWCMVQPFEELDGIESVLSGYTGGHVENPTYKEVCSKTTGHTEAVEIIFNPEKISYADLVELYWAQTDPTDAFGQFEDRGDNYRPVIFYENEEQRQIAQKSKDKLQASGRFDRPIVTSIEPADTFYPAEDYHQAFYRTNPARYALSSARRHAFLEENWH.

Residue C10 is part of the active site.

Belongs to the MsrA Met sulfoxide reductase family.

It catalyses the reaction L-methionyl-[protein] + [thioredoxin]-disulfide + H2O = L-methionyl-(S)-S-oxide-[protein] + [thioredoxin]-dithiol. It carries out the reaction [thioredoxin]-disulfide + L-methionine + H2O = L-methionine (S)-S-oxide + [thioredoxin]-dithiol. Functionally, has an important function as a repair enzyme for proteins that have been inactivated by oxidation. Catalyzes the reversible oxidation-reduction of methionine sulfoxide in proteins to methionine. The polypeptide is Peptide methionine sulfoxide reductase MsrA (Streptococcus agalactiae serotype Ia (strain ATCC 27591 / A909 / CDC SS700)).